Here is a 392-residue protein sequence, read N- to C-terminus: tRNA (guanine-N(7)-)-methyltransferase (392 aa).

S-adenosyl-L-methionine contacts are provided by E123, E148, and D175. The substrate site is built by K201 and D231.

It belongs to the class I-like SAM-binding methyltransferase superfamily. TrmB family.

It catalyses the reaction guanosine(46) in tRNA + S-adenosyl-L-methionine = N(7)-methylguanosine(46) in tRNA + S-adenosyl-L-homocysteine. Its pathway is tRNA modification; N(7)-methylguanine-tRNA biosynthesis. In terms of biological role, catalyzes the formation of N(7)-methylguanine at position 46 (m7G46) in tRNA. The protein is tRNA (guanine-N(7)-)-methyltransferase of Campylobacter jejuni subsp. jejuni serotype O:2 (strain ATCC 700819 / NCTC 11168).